The chain runs to 188 residues: Putative protein SSX9 (188 aa).

Residues Lys-20–Asp-83 enclose the KRAB-related domain. The tract at residues Lys-114–Thr-165 is disordered. The segment covering Lys-115 to Pro-127 has biased composition (basic and acidic residues). Phosphoserine is present on Ser-123. Residues Gly-156–Thr-165 show a composition bias toward basic residues.

It belongs to the SSX family. As to expression, not detected in any normal or tumor tissues.

Its function is as follows. Could act as a modulator of transcription. This chain is Putative protein SSX9, found in Homo sapiens (Human).